A 218-amino-acid polypeptide reads, in one-letter code: N-(5'-phosphoribosyl)anthranilate isomerase (218 aa).

It belongs to the TrpF family.

The enzyme catalyses N-(5-phospho-beta-D-ribosyl)anthranilate = 1-(2-carboxyphenylamino)-1-deoxy-D-ribulose 5-phosphate. It functions in the pathway amino-acid biosynthesis; L-tryptophan biosynthesis; L-tryptophan from chorismate: step 3/5. This is N-(5'-phosphoribosyl)anthranilate isomerase from Rhodospirillum rubrum (strain ATCC 11170 / ATH 1.1.1 / DSM 467 / LMG 4362 / NCIMB 8255 / S1).